Here is a 317-residue protein sequence, read N- to C-terminus: L-lactate dehydrogenase (317 aa).

Residues Val16, Asp37, Lys42, Tyr68, and 82–83 (GA) contribute to the NAD(+) site. Residues Gln85 and Arg91 each contribute to the substrate site. Residues Thr104, 121-123 (ATN), and Ser146 contribute to the NAD(+) site. 123 to 126 (NPVD) provides a ligand contact to substrate. 151–154 (DTAR) contributes to the substrate binding site. The beta-D-fructose 1,6-bisphosphate site is built by Arg156 and His171. The active-site Proton acceptor is the His178. Tyr222 is modified (phosphotyrosine). Position 231 (Thr231) interacts with substrate.

The protein belongs to the LDH/MDH superfamily. LDH family. Homotetramer.

It localises to the cytoplasm. It catalyses the reaction (S)-lactate + NAD(+) = pyruvate + NADH + H(+). Its pathway is fermentation; pyruvate fermentation to lactate; (S)-lactate from pyruvate: step 1/1. Allosterically activated by fructose 1,6-bisphosphate (FBP). Catalyzes the conversion of lactate to pyruvate. This Corynebacterium efficiens (strain DSM 44549 / YS-314 / AJ 12310 / JCM 11189 / NBRC 100395) protein is L-lactate dehydrogenase.